Here is a 121-residue protein sequence, read N- to C-terminus: ATP synthase epsilon chain (121 aa).

This sequence belongs to the ATPase epsilon chain family. In terms of assembly, F-type ATPases have 2 components, CF(1) - the catalytic core - and CF(0) - the membrane proton channel. CF(1) has five subunits: alpha(3), beta(3), gamma(1), delta(1), epsilon(1). CF(0) has three main subunits: a, b and c.

The protein resides in the cell membrane. Functionally, produces ATP from ADP in the presence of a proton gradient across the membrane. This is ATP synthase epsilon chain from Mycobacterium sp. (strain JLS).